Consider the following 506-residue polypeptide: Maturase K (506 aa).

The protein belongs to the intron maturase 2 family. MatK subfamily.

The protein localises to the plastid. It is found in the chloroplast. In terms of biological role, usually encoded in the trnK tRNA gene intron. Probably assists in splicing its own and other chloroplast group II introns. This chain is Maturase K, found in Carica papaya (Papaya).